Here is a 244-residue protein sequence, read N- to C-terminus: MMNLLSSDGVQVLPRPFTLNERRREVRSFVLRQGHFTPAQKRAFDHYWPRFGVDFIGQLRDLDVLFGRSAPKVLEVGFGNGAALRFAAQHEPRYDYIGIEVYAPGVGRLLNGLAEDGSRHVRLYHYDAVEVLNKEIVDGALDEIRIYFPDPWHKKRHHKRRLIQPLFATLLVRKLRVGGCLHMATDWADYAEQMWDVLDATPGLVNRAGLRGQVPCPDWRVQTRFERRGQNLGHRVWNLLYDRV.

4 residues coordinate S-adenosyl-L-methionine: Glu75, Glu100, Asp127, and Asp150. Residue Asp150 is part of the active site. Residues Lys154, Asp186, and 223–226 each bind substrate; that span reads TRFE.

This sequence belongs to the class I-like SAM-binding methyltransferase superfamily. TrmB family.

The enzyme catalyses guanosine(46) in tRNA + S-adenosyl-L-methionine = N(7)-methylguanosine(46) in tRNA + S-adenosyl-L-homocysteine. It functions in the pathway tRNA modification; N(7)-methylguanine-tRNA biosynthesis. In terms of biological role, catalyzes the formation of N(7)-methylguanine at position 46 (m7G46) in tRNA. The protein is tRNA (guanine-N(7)-)-methyltransferase of Xylella fastidiosa (strain M23).